A 790-amino-acid chain; its full sequence is Potassium transporter 22 (790 aa).

Over 1 to 64 (MAQQQGQGAG…HGEGWARTLR (64 aa)) the chain is Cytoplasmic. The chain crosses the membrane as a helical span at residues 65-85 (LAFQCFGVLYGDIGTSPLYVY). The Extracellular portion of the chain corresponds to 86 to 98 (STTFDGGIRHTDD). The chain crosses the membrane as a helical span at residues 99 to 119 (LLGVLSLIIYSFLLFTIIKYV). Over 120 to 198 (YIALRANDDG…DLLENSRPVR (79 aa)) the chain is Cytoplasmic. Residues 199–219 (ISLFLLTILATAMVISDACLT) form a helical membrane-spanning segment. Residues 220–236 (PAISVLSAVGGLKDKAP) are Extracellular-facing. The helical transmembrane segment at 237–257 (HLNTEQVVWVTVGILVMLFAV) threads the bilayer. Residues 258-264 (QRFGTDK) lie on the Cytoplasmic side of the membrane. The helical transmembrane segment at 265-285 (VGYLFAPVVLLWLLLIGGVGV) threads the bilayer. Residues 286–318 (YNLAAHDVGVLRAFNPKYILDYFRRNGRHGWVS) are Extracellular-facing. The helical transmembrane segment at 319–339 (LGGVLLCFTGTEALFADLGCF) threads the bilayer. The Cytoplasmic segment spans residues 340 to 345 (SIRSIQ). The helical transmembrane segment at 346–366 (LSFAFGLVPAVLLAYAGQAAY) threads the bilayer. At 367 to 385 (LRVYPDHVGDAFYASTPQV) the chain is on the extracellular side. A helical transmembrane segment spans residues 386 to 406 (LFWPTLVLALAASVVGSQAMI). At 407–437 (SCAFATISHSQAMGCFPRVKVVHTSRQYQGQ) the chain is on the cytoplasmic side. A helical membrane pass occupies residues 438–458 (VYIPEINLLLGAAACVVTVAA). Over 459-469 (RDTVVIGEAHG) the chain is Extracellular. Residues 470–490 (ICVVLVMLITTLLLTVVMVLV) form a helical membrane-spanning segment. Residues 491-492 (WR) lie on the Cytoplasmic side of the membrane. Residues 493 to 513 (VNIGWVLVFACVFASTESVYL) traverse the membrane as a helical segment. The Extracellular portion of the chain corresponds to 514–519 (TSVLYK). The chain crosses the membrane as a helical span at residues 520–540 (FAHGGYIPVAMSAVLMGVMGV). Over 541-790 (WHYVHVRRYK…LLKVGMSYEI (250 aa)) the chain is Cytoplasmic.

This sequence belongs to the HAK/KUP transporter (TC 2.A.72.3) family.

It localises to the membrane. High-affinity potassium transporter. In Oryza sativa subsp. japonica (Rice), this protein is Potassium transporter 22 (HAK22).